A 201-amino-acid polypeptide reads, in one-letter code: L(+)-tartrate dehydratase subunit beta (201 aa).

His-37 is a catalytic residue.

It belongs to the class-I fumarase family. In terms of assembly, heterotetramer of two alpha and two beta subunits.

The enzyme catalyses (2R,3R)-tartrate = oxaloacetate + H2O. The protein is L(+)-tartrate dehydratase subunit beta (ttdB) of Shigella sonnei (strain Ss046).